The chain runs to 37 residues: Cytochrome b6-f complex subunit 5 (37 aa).

A helical membrane pass occupies residues 5 to 25 (LLSGIVLGLIPITLAGLFVTA).

This sequence belongs to the PetG family. As to quaternary structure, the 4 large subunits of the cytochrome b6-f complex are cytochrome b6, subunit IV (17 kDa polypeptide, PetD), cytochrome f and the Rieske protein, while the 4 small subunits are PetG, PetL, PetM and PetN. The complex functions as a dimer.

It localises to the plastid. Its subcellular location is the chloroplast thylakoid membrane. Functionally, component of the cytochrome b6-f complex, which mediates electron transfer between photosystem II (PSII) and photosystem I (PSI), cyclic electron flow around PSI, and state transitions. PetG is required for either the stability or assembly of the cytochrome b6-f complex. The chain is Cytochrome b6-f complex subunit 5 from Chara vulgaris (Common stonewort).